The sequence spans 188 residues: Putative manganese efflux pump MntP (188 aa).

6 helical membrane-spanning segments follow: residues 3 to 23 (LYALLLIALGMSMDAFAVALA), 35 to 55 (IAATALVFGTVEALTPLAGWV), 70 to 90 (WAAFVLLGGLGLKMMHEGLSG), 104 to 126 (WLTVLTAFGTSIDSMIVGVGLAF), 140 to 160 (MATTVLVAVGLTVGRALGVLF), and 167 to 187 (AGGLVLIAIGTWTLLSHLGLI).

It belongs to the MntP (TC 9.B.29) family.

It localises to the cell inner membrane. Functionally, probably functions as a manganese efflux pump. In Neisseria meningitidis serogroup C / serotype 2a (strain ATCC 700532 / DSM 15464 / FAM18), this protein is Putative manganese efflux pump MntP.